The chain runs to 434 residues: Chaperone SurA (434 aa).

An N-terminal signal peptide occupies residues 1–20 (MKNWRTLILGLVICANTAFA). PpiC domains are found at residues 171 to 272 (DTEL…KVND) and 282 to 382 (VTEV…QLVD).

The protein resides in the periplasm. It carries out the reaction [protein]-peptidylproline (omega=180) = [protein]-peptidylproline (omega=0). Its function is as follows. Chaperone involved in the correct folding and assembly of outer membrane proteins. Recognizes specific patterns of aromatic residues and the orientation of their side chains, which are found more frequently in integral outer membrane proteins. May act in both early periplasmic and late outer membrane-associated steps of protein maturation. In Yersinia pestis bv. Antiqua (strain Antiqua), this protein is Chaperone SurA.